Consider the following 347-residue polypeptide: Sesquiterpene synthase M422DRAFT_47084 (347 aa).

Mg(2+)-binding residues include Asp-93, Asn-228, Ser-232, and Glu-236. Positions 93-97 match the DDXXD motif motif; the sequence is DEYTD. Residues Arg-318 and Tyr-319 each coordinate (2E,6E)-farnesyl diphosphate.

It belongs to the terpene synthase family. It depends on Mg(2+) as a cofactor.

It catalyses the reaction (2E,6E)-farnesyl diphosphate = viridiflorene + diphosphate. Functionally, terpene cyclase that catalyzes the cyclization of farnesyl diphosphate (FPP) to viridiflorene and viridiflorol. In Sphaerobolus stellatus (strain SS14), this protein is Sesquiterpene synthase M422DRAFT_47084.